Here is a 360-residue protein sequence, read N- to C-terminus: Ethanolamine-phosphate cytidylyltransferase (360 aa).

CTP is bound by residues 207–208, 215–218, Lys-243, 291–294, and 321–325; these read GF, HTEA, HGDD, and HTEGL.

This sequence belongs to the cytidylyltransferase family.

It catalyses the reaction phosphoethanolamine + CTP + H(+) = CDP-ethanolamine + diphosphate. It functions in the pathway phospholipid metabolism; phosphatidylethanolamine biosynthesis; phosphatidylethanolamine from ethanolamine: step 2/3. In terms of biological role, ethanolamine-phosphate cytidylyltransferase that catalyzes the second step in the synthesis of phosphatidylethanolamine (PE) from ethanolamine via the CDP-ethanolamine pathway. The sequence is that of Ethanolamine-phosphate cytidylyltransferase (pctA) from Dictyostelium discoideum (Social amoeba).